The chain runs to 380 residues: O-phospho-L-seryl-tRNA:Cys-tRNA synthase (380 aa).

Pyridoxal 5'-phosphate contacts are provided by residues 86–87 (AR), asparagine 192, and 215–217 (SGH). Lysine 218 carries the post-translational modification N6-(pyridoxal phosphate)lysine.

The protein belongs to the SepCysS family. As to quaternary structure, homodimer. Interacts with SepRS. Pyridoxal 5'-phosphate is required as a cofactor.

It catalyses the reaction O-phospho-L-seryl-tRNA(Cys) + hydrogen sulfide + H(+) = L-cysteinyl-tRNA(Cys) + phosphate. Functionally, converts O-phospho-L-seryl-tRNA(Cys) (Sep-tRNA(Cys)) to L-cysteinyl-tRNA(Cys) (Cys-tRNA(Cys)). The sequence is that of O-phospho-L-seryl-tRNA:Cys-tRNA synthase from Methanococcus maripaludis (strain DSM 14266 / JCM 13030 / NBRC 101832 / S2 / LL).